Here is a 280-residue protein sequence, read N- to C-terminus: Tobamovirus multiplication protein 2A (280 aa).

Over 1–13 (MACRGCLECLLKL) the chain is Cytoplasmic. The helical transmembrane segment at 14-34 (LNFLLAVAGLGMIGYGIYLFV) threads the bilayer. Over 35-78 (EYKRVTDNSVTFDLTNGDQSYVSFGRPILMAVSLSSNIFDNLPK) the chain is Extracellular. The helical transmembrane segment at 79–99 (AWFIYLFIGIGVALFVISCCG) threads the bilayer. Over 100–113 (CVGTCSRSVCCLSC) the chain is Cytoplasmic. Residues 114 to 134 (YSLLLILLILVELGFAAFIFF) traverse the membrane as a helical segment. Topologically, residues 135 to 162 (DNSWRDELPSDRTGNFDTIYNFLRENWK) are extracellular. Residues 163-183 (IVRWVALGAVVFEALLFLLAL) form a helical membrane-spanning segment. Residues 184–280 (MVRAANTPAE…NEEKGRCTIM (97 aa)) lie on the Cytoplasmic side of the membrane. 2 positions are modified to phosphoserine: Ser196 and Ser233. A disordered region spans residues 258-280 (SESHRFQQMPAQPNEEKGRCTIM). Residues 271–280 (NEEKGRCTIM) are compositionally biased toward basic and acidic residues.

The protein belongs to the tetraspanin (TM4SF) family. As to quaternary structure, homodimer. Constituent of tobamovirus replication complex. Interacts with TOM1. As to expression, expressed in rosette leaves.

The protein localises to the vacuole membrane. Its function is as follows. Necessary for the efficient intracellular multiplication of tobamoviruses, being a component of the replication complex. This chain is Tobamovirus multiplication protein 2A (TOM2A), found in Arabidopsis thaliana (Mouse-ear cress).